A 1128-amino-acid chain; its full sequence is Membrane-associated guanylate kinase, WW and PDZ domain-containing protein 3 (1128 aa).

Positions 22-108 (WGGPAGPDPE…PVRLKTVRPG (87 aa)) constitute a PDZ 1 domain. A Guanylate kinase-like domain is found at 116–290 (RHYLSLQFQK…SMDFRNYMSR (175 aa)). Residue 123 to 130 (FQKGSIDH) coordinates ATP. The segment at 184-276 (TYDGNFYGTP…DWMKPVPSYN (93 aa)) is disordered. The segment covering 193–204 (PKPPAEPSPFQP) has biased composition (pro residues). The span at 238 to 247 (LPEDEEEEEK) shows a compositional bias: acidic residues. Residues 257-267 (ENKEKHSDSSD) are compositionally biased toward basic and acidic residues. WW domains are found at residues 295–328 (EPLP…DPRL) and 341–374 (GELP…NPVL). PDZ domains follow at residues 412 to 494 (RTSL…TLCR) and 581 to 657 (TIPL…LILR). The disordered stretch occupies residues 658-688 (GGPPSPTKTGKMKDKQESSGSLEALSDAIPQ). PDZ domains follow at residues 728-810 (DVFL…TVRR) and 852-939 (DVCL…VAEE). Disordered stretches follow at residues 939–985 (EEHR…GKEV) and 999–1018 (LAQP…SQAQ). Composition is skewed to polar residues over residues 946–956 (SGTNSAKQSPA) and 965–974 (AQSSASSTDR). The PDZ 6 domain maps to 1024–1106 (PVELERGPRG…KVLLLLRPGT (83 aa)).

The protein belongs to the MAGUK family.

It localises to the cell membrane. Its subcellular location is the cell junction. The protein localises to the tight junction. Acts as a scaffolding protein at cell-cell junctions, thereby regulating various cellular and signaling processes. The sequence is that of Membrane-associated guanylate kinase, WW and PDZ domain-containing protein 3 (MAGI3) from Gallus gallus (Chicken).